The chain runs to 378 residues: Quinolinate synthase (378 aa).

Residues histidine 59 and serine 80 each contribute to the iminosuccinate site. Cysteine 125 is a [4Fe-4S] cluster binding site. Residues 151–153 (YAN) and serine 168 contribute to the iminosuccinate site. Position 212 (cysteine 212) interacts with [4Fe-4S] cluster. Residues 238 to 240 (HPE) and threonine 255 each bind iminosuccinate. Cysteine 309 is a binding site for [4Fe-4S] cluster.

The protein belongs to the quinolinate synthase family. Type 1 subfamily. [4Fe-4S] cluster serves as cofactor.

The protein resides in the cytoplasm. It catalyses the reaction iminosuccinate + dihydroxyacetone phosphate = quinolinate + phosphate + 2 H2O + H(+). It participates in cofactor biosynthesis; NAD(+) biosynthesis; quinolinate from iminoaspartate: step 1/1. Its function is as follows. Catalyzes the condensation of iminoaspartate with dihydroxyacetone phosphate to form quinolinate. This Burkholderia pseudomallei (strain 1106a) protein is Quinolinate synthase.